We begin with the raw amino-acid sequence, 630 residues long: Protein mono-ADP-ribosyltransferase PARP6 (630 aa).

Cysteine 237 carries the post-translational modification ADP-ribosylcysteine. The region spanning 394–620 (EMTQGSYLEI…QDPKIQKEIM (227 aa)) is the PARP catalytic domain. Position 600 is an ADP-ribosyl aspartic acid (aspartate 600).

The protein belongs to the ARTD/PARP family. Post-translationally, auto-mono-ADP-ribosylated.

The catalysed reaction is L-aspartyl-[protein] + NAD(+) = 4-O-(ADP-D-ribosyl)-L-aspartyl-[protein] + nicotinamide. It carries out the reaction L-cysteinyl-[protein] + NAD(+) = S-(ADP-D-ribosyl)-L-cysteinyl-[protein] + nicotinamide + H(+). Its function is as follows. Mono-ADP-ribosyltransferase that mediates mono-ADP-ribosylation of target proteins. The chain is Protein mono-ADP-ribosyltransferase PARP6 from Homo sapiens (Human).